The sequence spans 250 residues: Endomucin (250 aa).

Residues 1–20 (MRLLQVTALFFLLSNSLCRG) form the signal peptide. 2 stretches are compositionally biased toward low complexity: residues 24-38 (KALTETSTTKASATT) and 45-60 (TNKSTGGTPPKGTTNS). 2 disordered regions span residues 24 to 83 (KALT…ETTT) and 105 to 153 (NAVS…LTTA). N-linked (GlcNAc...) asparagine glycans are attached at residues asparagine 46, asparagine 115, and asparagine 119. Composition is skewed to polar residues over residues 105–135 (NAVSTLSSPQNKTENQSSIRTTEISGTNQLP) and 143–153 (TETPSASLTTA). The helical transmembrane segment at 180 to 200 (VILPVVIALIVITVLVFTLVG) threads the bilayer. A disordered region spans residues 210 to 250 (PGTPESGNDQPQSDKESVKLLTVKTISHESGEHSAQGKAKN). A Phosphoserine modification is found at serine 226.

Post-translationally, highly O-glycosylated. Sialic acid-rich glycoprotein.

It localises to the membrane. In terms of biological role, endothelial sialomucin, also called endomucin or mucin-like sialoglycoprotein, which interferes with the assembly of focal adhesion complexes and inhibits interaction between cells and the extracellular matrix. In Rattus norvegicus (Rat), this protein is Endomucin (Emcn).